A 230-amino-acid polypeptide reads, in one-letter code: Ribonuclease 3 (230 aa).

An RNase III domain is found at 6–135; the sequence is VSELRARYGI…FNGALFLDQG (130 aa). A Mg(2+)-binding site is contributed by Glu48. The active site involves Asp52. Asp121 and Glu124 together coordinate Mg(2+). Glu124 is an active-site residue. The DRBM domain maps to 161-230; the sequence is DYKTNLQEFL…AKKALEQLKA (70 aa).

The protein belongs to the ribonuclease III family. In terms of assembly, homodimer. It depends on Mg(2+) as a cofactor.

It is found in the cytoplasm. It catalyses the reaction Endonucleolytic cleavage to 5'-phosphomonoester.. In terms of biological role, digests double-stranded RNA. Involved in the processing of primary rRNA transcript to yield the immediate precursors to the large and small rRNAs (23S and 16S). Processes some mRNAs, and tRNAs when they are encoded in the rRNA operon. Processes pre-crRNA and tracrRNA of type II CRISPR loci if present in the organism. The protein is Ribonuclease 3 of Latilactobacillus sakei subsp. sakei (strain 23K) (Lactobacillus sakei subsp. sakei).